We begin with the raw amino-acid sequence, 192 residues long: Pyridoxal 5'-phosphate synthase subunit PdxT (192 aa).

Residue 47-49 (GES) coordinates L-glutamine. Cysteine 79 acts as the Nucleophile in catalysis. L-glutamine contacts are provided by residues arginine 106 and 134-135 (IR). Residues histidine 170 and glutamate 172 each act as charge relay system in the active site.

The protein belongs to the glutaminase PdxT/SNO family. As to quaternary structure, in the presence of PdxS, forms a dodecamer of heterodimers. Only shows activity in the heterodimer.

The enzyme catalyses aldehydo-D-ribose 5-phosphate + D-glyceraldehyde 3-phosphate + L-glutamine = pyridoxal 5'-phosphate + L-glutamate + phosphate + 3 H2O + H(+). The catalysed reaction is L-glutamine + H2O = L-glutamate + NH4(+). The protein operates within cofactor biosynthesis; pyridoxal 5'-phosphate biosynthesis. Catalyzes the hydrolysis of glutamine to glutamate and ammonia as part of the biosynthesis of pyridoxal 5'-phosphate. The resulting ammonia molecule is channeled to the active site of PdxS. The chain is Pyridoxal 5'-phosphate synthase subunit PdxT from Anoxybacillus flavithermus (strain DSM 21510 / WK1).